The following is a 257-amino-acid chain: Alcohol dehydrogenase 1 (257 aa).

9 to 33 is a binding site for NAD(+); sequence VFVGGLGFIGYEACKTLITRDLASL. S137 provides a ligand contact to substrate. Y150 functions as the Proton acceptor in the catalytic mechanism.

The protein belongs to the short-chain dehydrogenases/reductases (SDR) family. In terms of assembly, homodimer.

The enzyme catalyses a primary alcohol + NAD(+) = an aldehyde + NADH + H(+). The catalysed reaction is a secondary alcohol + NAD(+) = a ketone + NADH + H(+). This is Alcohol dehydrogenase 1 (ADH1) from Ceratitis cosyra (Mango fruit fly).